The following is a 189-amino-acid chain: Putative ankyrin repeat protein TV1425 (189 aa).

4 ANK repeats span residues 31–60 (YNRT…KLED), 64–93 (EGST…NVNT), 97–126 (SGKT…NVND), and 130–159 (EGET…DISA).

In Thermoplasma volcanium (strain ATCC 51530 / DSM 4299 / JCM 9571 / NBRC 15438 / GSS1), this protein is Putative ankyrin repeat protein TV1425.